The sequence spans 87 residues: Small ribosomal subunit protein bS20 (87 aa).

The interval 1-20 (MANHKSAEKRARQTIKRTER) is disordered.

This sequence belongs to the bacterial ribosomal protein bS20 family.

Its function is as follows. Binds directly to 16S ribosomal RNA. In Campylobacter lari (strain RM2100 / D67 / ATCC BAA-1060), this protein is Small ribosomal subunit protein bS20.